The chain runs to 209 residues: MTTGKFIVLEGIEGAGKTTARDSIVRALHAHGIHDIVFTREPGGTPLAEKLRQLIKHETEEPVTDKAELLMLYAARIQLVENVIKPALAQGKWVIGDRHDMSSQAYQGGGRQLDQHLLHTLKQTILGEFEPDLTLYLDIDPVLGLSRAKGRGALDRIEQQNLDFFHRTRQRYQELVRHNPKAVTIDASQTMSKVAEDVESAIETWLTTR.

Position 11–18 (Gly11–Thr18) interacts with ATP.

The protein belongs to the thymidylate kinase family.

It catalyses the reaction dTMP + ATP = dTDP + ADP. Its function is as follows. Phosphorylation of dTMP to form dTDP in both de novo and salvage pathways of dTTP synthesis. The polypeptide is Thymidylate kinase (tmk) (Pasteurella multocida (strain Pm70)).